Consider the following 304-residue polypeptide: Tyrosine recombinase XerC (304 aa).

Residues 2–88 (ENVKNFVKLF…ALRSFYKFLM (87 aa)) form the Core-binding (CB) domain. The region spanning 109-294 (RIPKFLYQKE…SKEMLRNTYM (186 aa)) is the Tyr recombinase domain. Active-site residues include R149, K173, H246, R249, and H272. The active-site O-(3'-phospho-DNA)-tyrosine intermediate is Y281.

It belongs to the 'phage' integrase family. XerC subfamily. Forms a cyclic heterotetrameric complex composed of two molecules of XerC and two molecules of XerD.

The protein resides in the cytoplasm. In terms of biological role, site-specific tyrosine recombinase, which acts by catalyzing the cutting and rejoining of the recombining DNA molecules. The XerC-XerD complex is essential to convert dimers of the bacterial chromosome into monomers to permit their segregation at cell division. It also contributes to the segregational stability of plasmids. The polypeptide is Tyrosine recombinase XerC (Bacillus subtilis (strain 168)).